A 45-amino-acid polypeptide reads, in one-letter code: EKGFGFISTENGQDVFAHFSAIQTNGFKTLEEGQKVAFDVEEGQR.

Residues 1–45 (EKGFGFISTENGQDVFAHFSAIQTNGFKTLEEGQKVAFDVEEGQR) form the CSD domain.

In terms of assembly, homodimer.

It localises to the cytoplasm. The polypeptide is Major cold shock protein (cspA) (Streptococcus pyogenes).